A 1167-amino-acid chain; its full sequence is Integrin alpha-10 (1167 aa).

Positions 1-22 are cleaved as a signal peptide; sequence MELPFVTHLFLPLVFLTGLCSP. Residues 23–1122 are Extracellular-facing; sequence FNLDEHHPRL…VVQTRPILIS (1100 aa). FG-GAP repeat units lie at residues 24–85 and 95–154; these read NLDE…HNAP and QLGN…PQGS. A disulfide bridge links C76 with C86. N-linked (GlcNAc...) asparagine glycosylation is found at N98, N234, N336, and N364. Positions 167–350 constitute a VWFA domain; sequence DVVIVLDGSN…AALTDIVDAL (184 aa). FG-GAP repeat units follow at residues 361 to 412, 417 to 470, 472 to 534, 535 to 593, and 597 to 657; these read HAEN…LFPP, EDEF…KDGA, RVAQ…SLLT, LQGT…GVRP, and QRIA…VTPQ. The Ca(2+) site is built by D494, D496, D498, D502, D558, N560, D562, D566, D620, D622, D624, and D628. 2 cysteine pairs are disulfide-bonded: C666–C675 and C681–C736. 2 N-linked (GlcNAc...) asparagine glycosylation sites follow: N733 and N763. Residues C789 and C795 are joined by a disulfide bond. N-linked (GlcNAc...) asparagine glycans are attached at residues N839, N921, N1011, N1018, and N1039. Residues 1123 to 1145 traverse the membrane as a helical segment; sequence LWILIGSVLGGLLLLALLVFCLW. The Cytoplasmic portion of the chain corresponds to 1146–1167; sequence KLGFFAHKKIPEEEKREEKLEQ.

It belongs to the integrin alpha chain family. Heterodimer of an alpha and a beta subunit. Alpha-10 associates with beta-1. Widely expressed with highest expression in muscle and heart. Found in articular cartilage.

The protein localises to the membrane. In terms of biological role, integrin alpha-10/beta-1 is a receptor for collagen. The polypeptide is Integrin alpha-10 (ITGA10) (Homo sapiens (Human)).